The following is a 258-amino-acid chain: MSSLLDKTRMLNRILQKSGTEPVDFEDICDLLSDVLACNVYIISRKGKILGSKFYSGFECEEVREVVLKENRFPDFYNNKLLNVNETLSNSPNHDKCVFDNLKDCSINNKLSTIVPINGNRERLGTLLLARFDKEFTDEDLILAEYSATIIGLEILRSKQDQIEEEARKKAVVQLAIGTLSYSELEAVEHIFNELDGTEGLLVASKIADKVGITRSVIVNALRKFESAGVIESRSLGMKGTHIRILNDKLLEELKKIK.

A GAF domain region spans residues 1-156; the sequence is MSSLLDKTRM…SATIIGLEIL (156 aa). Positions 204–223 form a DNA-binding region, H-T-H motif; that stretch reads ASKIADKVGITRSVIVNALR.

It belongs to the CodY family.

It is found in the cytoplasm. In terms of biological role, DNA-binding global transcriptional regulator which is involved in the adaptive response to starvation and acts by directly or indirectly controlling the expression of numerous genes in response to nutrient availability. During rapid exponential growth, CodY is highly active and represses genes whose products allow adaptation to nutrient depletion. The sequence is that of Global transcriptional regulator CodY from Clostridium botulinum (strain Okra / Type B1).